A 333-amino-acid polypeptide reads, in one-letter code: Glycerol-3-phosphate dehydrogenase [NAD(P)+] (333 aa).

3 residues coordinate NADPH: Ser-10, Trp-11, and Lys-105. Residues Lys-105, Gly-136, and Thr-138 each coordinate sn-glycerol 3-phosphate. Ala-140 contributes to the NADPH binding site. Residues Lys-191, Asp-244, Ser-254, Arg-255, and Asn-256 each contribute to the sn-glycerol 3-phosphate site. Lys-191 acts as the Proton acceptor in catalysis. Residue Arg-255 coordinates NADPH. The NADPH site is built by Val-279 and Glu-281.

Belongs to the NAD-dependent glycerol-3-phosphate dehydrogenase family.

The protein resides in the cytoplasm. It catalyses the reaction sn-glycerol 3-phosphate + NAD(+) = dihydroxyacetone phosphate + NADH + H(+). The catalysed reaction is sn-glycerol 3-phosphate + NADP(+) = dihydroxyacetone phosphate + NADPH + H(+). It functions in the pathway membrane lipid metabolism; glycerophospholipid metabolism. Its function is as follows. Catalyzes the reduction of the glycolytic intermediate dihydroxyacetone phosphate (DHAP) to sn-glycerol 3-phosphate (G3P), the key precursor for phospholipid synthesis. The chain is Glycerol-3-phosphate dehydrogenase [NAD(P)+] from Trichlorobacter lovleyi (strain ATCC BAA-1151 / DSM 17278 / SZ) (Geobacter lovleyi).